The following is a 398-amino-acid chain: tRNA-specific 2-thiouridylase MnmA (398 aa).

ATP is bound by residues 19-26 (AMSGGVDS) and L45. C113 (nucleophile) is an active-site residue. The cysteines at positions 113 and 210 are disulfide-linked. An ATP-binding site is contributed by G137. Positions 160 to 162 (RDQ) are interaction with tRNA. C210 acts as the Cysteine persulfide intermediate in catalysis.

It belongs to the MnmA/TRMU family.

The protein localises to the cytoplasm. The catalysed reaction is S-sulfanyl-L-cysteinyl-[protein] + uridine(34) in tRNA + AH2 + ATP = 2-thiouridine(34) in tRNA + L-cysteinyl-[protein] + A + AMP + diphosphate + H(+). In terms of biological role, catalyzes the 2-thiolation of uridine at the wobble position (U34) of tRNA, leading to the formation of s(2)U34. In Rhodopseudomonas palustris (strain BisB5), this protein is tRNA-specific 2-thiouridylase MnmA.